Consider the following 717-residue polypeptide: Ribosomal RNA large subunit methyltransferase K/L (717 aa).

A THUMP domain is found at 44 to 155 (DAYKVCIYSY…KQFVNVFLCL (112 aa)).

This sequence belongs to the methyltransferase superfamily. RlmKL family.

It localises to the cytoplasm. The enzyme catalyses guanosine(2445) in 23S rRNA + S-adenosyl-L-methionine = N(2)-methylguanosine(2445) in 23S rRNA + S-adenosyl-L-homocysteine + H(+). The catalysed reaction is guanosine(2069) in 23S rRNA + S-adenosyl-L-methionine = N(2)-methylguanosine(2069) in 23S rRNA + S-adenosyl-L-homocysteine + H(+). In terms of biological role, specifically methylates the guanine in position 2445 (m2G2445) and the guanine in position 2069 (m7G2069) of 23S rRNA. The chain is Ribosomal RNA large subunit methyltransferase K/L from Francisella tularensis subsp. tularensis (strain SCHU S4 / Schu 4).